We begin with the raw amino-acid sequence, 203 residues long: Phospho-2-dehydro-3-deoxyheptonate aldolase (203 aa).

The span at 1 to 10 (MIDRLVRDSR) shows a compositional bias: basic and acidic residues. The interval 1-28 (MIDRLVRDSRGPVTERNPPHMSLSAGPA) is disordered.

This sequence belongs to the class-I DAHP synthase family.

The catalysed reaction is D-erythrose 4-phosphate + phosphoenolpyruvate + H2O = 7-phospho-2-dehydro-3-deoxy-D-arabino-heptonate + phosphate. Its pathway is metabolic intermediate biosynthesis; chorismate biosynthesis; chorismate from D-erythrose 4-phosphate and phosphoenolpyruvate: step 1/7. Stereospecific condensation of phosphoenolpyruvate (PEP) and D-erythrose-4-phosphate (E4P) giving rise to 3-deoxy-D-arabino-heptulosonate-7-phosphate (DAHP). The sequence is that of Phospho-2-dehydro-3-deoxyheptonate aldolase (aroA) from Amycolatopsis methanolica.